A 142-amino-acid polypeptide reads, in one-letter code: Small ribosomal subunit protein uS12 (142 aa).

This sequence belongs to the universal ribosomal protein uS12 family. Part of the 30S ribosomal subunit.

Functionally, with S4 and S5 plays an important role in translational accuracy. Located at the interface of the 30S and 50S subunits. The chain is Small ribosomal subunit protein uS12 from Methanospirillum hungatei JF-1 (strain ATCC 27890 / DSM 864 / NBRC 100397 / JF-1).